The chain runs to 254 residues: L-arabinose 1-dehydrogenase (NAD(P)(+)) (254 aa).

Tyr-142 serves as the catalytic Proton acceptor. NAD(+)-binding residues include Tyr-142 and Lys-146.

Belongs to the NAD(P)-dependent epimerase/dehydratase family. Homotetramer.

It catalyses the reaction alpha-L-arabinopyanose + NAD(+) = L-arabinono-1,4-lactone + NADH + H(+). The catalysed reaction is alpha-L-arabinopyanose + NADP(+) = L-arabinono-1,4-lactone + NADPH + H(+). Its pathway is carbohydrate degradation; L-arabinose degradation via L-arabinono-1,4-lactone pathway. Its function is as follows. L-AraDH initiates the degradation of L-arabinose. Catalyzes the NAD(P)(+)-dependent conversion of L-arabinose to L-arabino-gamma-lactone. It is highly specific for L-arabinose as substrate and can use both NADP(+) and NAD(+) as electron acceptor, with a slight preference for NADP(+). In Haloferax volcanii (strain ATCC 29605 / DSM 3757 / JCM 8879 / NBRC 14742 / NCIMB 2012 / VKM B-1768 / DS2) (Halobacterium volcanii), this protein is L-arabinose 1-dehydrogenase (NAD(P)(+)).